Reading from the N-terminus, the 1196-residue chain is Cingulin (1196 aa).

Residues 7–354 are head; the sequence is MAEPRGPVDH…LVMTSGSAKG (348 aa). Positions 48–62 match the ZIM motif; the sequence is ANTYGVAVRVQGIAG. Residues 54–67 are interaction with TJP1/ZO1; that stretch reads AVRVQGIAGQPFVV. The disordered stretch occupies residues 82 to 105; it reads IKGTNNRGPPGALSSDSELPESTY. A phosphoserine mark is found at Ser95, Ser96, Ser98, Ser135, Ser137, Ser140, Ser155, Ser165, and Ser214. Polar residues predominate over residues 95-105; sequence SSDSELPESTY. The disordered stretch occupies residues 183-263; sequence NKFDSRQGGQ…NQGPLGGFSC (81 aa). The span at 218–231 shows a compositional bias: basic and acidic residues; sequence RLPRDTLDEREHQF. Over residues 245–256 the composition is skewed to polar residues; the sequence is MGNSKQSSQNQG. Ser274 is modified (phosphoserine). Positions 355–1150 form a coiled coil; it reads LTGQSELSQK…ARIKTLEKDS (796 aa). Lys576 bears the N6-acetyllysine mark. Residues 884–897 show a composition bias toward basic and acidic residues; that stretch reads AQRQAKEWATEAEK. Disordered stretches follow at residues 884–906, 1023–1061, and 1149–1174; these read AQRQAKEWATEAEKNSGGLSRLQ, DLKSRLASSEGFQKPSASLSQLESQNQELQERLQAEERE, and DSWRKASRSAAESAQREGLSSDEEFD. Low complexity predominate over residues 1038–1050; it reads SASLSQLESQNQE. Basic and acidic residues predominate over residues 1051 to 1061; it reads LQERLQAEERE. The segment at 1155–1196 is tail; sequence SRSAAESAQREGLSSDEEFDSVYDPSSIASLLTESNLQTSSC. Phosphoserine is present on residues Ser1168, Ser1169, and Ser1175.

It belongs to the cingulin family. In terms of assembly, homodimer. Interacts with TJP1/ZO1 and SPEF1.

The protein resides in the cell junction. It is found in the tight junction. Its function is as follows. Probably plays a role in the formation and regulation of the tight junction (TJ) paracellular permeability barrier. The chain is Cingulin from Canis lupus familiaris (Dog).